The primary structure comprises 505 residues: Putative thymidine phosphorylase (505 aa).

It belongs to the thymidine/pyrimidine-nucleoside phosphorylase family. Type 2 subfamily.

It catalyses the reaction thymidine + phosphate = 2-deoxy-alpha-D-ribose 1-phosphate + thymine. This Hahella chejuensis (strain KCTC 2396) protein is Putative thymidine phosphorylase.